The chain runs to 356 residues: Heparan sulfate 2-O-sulfotransferase 1 (356 aa).

At 1–11 (MGLLRIMMPPK) the chain is on the cytoplasmic side. The chain crosses the membrane as a helical; Signal-anchor for type II membrane protein span at residues 12 to 28 (LQLLAVVAFAVAMLFLE). Residues 24–51 (MLFLENQIQKLEESRSKLERAIARHEVR) are a coiled coil. Topologically, residues 29–356 (NQIQKLEESR…FYEKIYPKSN (328 aa)) are lumenal. 6 residues coordinate adenosine 3',5'-bisphosphate: Lys-83, Thr-84, Ala-85, Ser-86, Thr-87, and Ser-88. 2 N-linked (GlcNAc...) asparagine glycosylation sites follow: Asn-108 and Asn-127. Active-site residues include His-140 and His-142. Adenosine 3',5'-bisphosphate contacts are provided by Arg-164 and Ser-172. 2 disulfides stabilise this stretch: Cys-201/Cys-209 and Cys-222/Cys-228. Adenosine 3',5'-bisphosphate-binding residues include Tyr-279, Ser-285, Thr-290, and Lys-293.

Belongs to the sulfotransferase 3 family. Homotrimer. Interacts with the C5-epimerase GLCE. In terms of processing, N-glycosylated.

It localises to the golgi apparatus membrane. In terms of biological role, catalyzes the transfer of a sulfo group from 3'-phospho-5'-adenylyl sulfate (PAPS) to the 2-OH position of iduronic acid (IdoA) or glucuronic acid (GlcA) within the heparan sulfate (HS) chain and participates in HS biosynthesis. Required for metanephric development of kidney formation, suggesting that 2-O-sulfation within HS is essential for signaling between ureteric bud and metanephric mesenchyme. The polypeptide is Heparan sulfate 2-O-sulfotransferase 1 (Homo sapiens (Human)).